Consider the following 166-residue polypeptide: NAD(P)H-quinone oxidoreductase subunit I, chloroplastic (166 aa).

2 consecutive 4Fe-4S ferredoxin-type domains span residues 55-84 (GRIH…VDWQ) and 95-124 (VNYS…MTEE). The [4Fe-4S] cluster site is built by C64, C67, C70, C74, C104, C107, C110, and C114.

The protein belongs to the complex I 23 kDa subunit family. NDH is composed of at least 16 different subunits, 5 of which are encoded in the nucleus. [4Fe-4S] cluster serves as cofactor.

Its subcellular location is the plastid. It localises to the chloroplast thylakoid membrane. It carries out the reaction a plastoquinone + NADH + (n+1) H(+)(in) = a plastoquinol + NAD(+) + n H(+)(out). The catalysed reaction is a plastoquinone + NADPH + (n+1) H(+)(in) = a plastoquinol + NADP(+) + n H(+)(out). NDH shuttles electrons from NAD(P)H:plastoquinone, via FMN and iron-sulfur (Fe-S) centers, to quinones in the photosynthetic chain and possibly in a chloroplast respiratory chain. The immediate electron acceptor for the enzyme in this species is believed to be plastoquinone. Couples the redox reaction to proton translocation, and thus conserves the redox energy in a proton gradient. This chain is NAD(P)H-quinone oxidoreductase subunit I, chloroplastic, found in Coreopsis petrophiloides (Tickseed).